We begin with the raw amino-acid sequence, 471 residues long: Regulator of microtubule dynamics protein 3 (471 aa).

The Mitochondrial intermembrane portion of the chain corresponds to 1-12 (MSRLGALGGSRA). A helical transmembrane segment spans residues 13–35 (GLGLLLGTAAGLGFLCVLYSQRW). Over 36–471 (KRTQRHGRSQ…LEELEVILGK (436 aa)) the chain is Cytoplasmic. Phosphoserine occurs at positions 44, 46, 50, and 57. A coiled-coil region spans residues 91 to 125 (LDRLDFVLTSLMALRREVEELQRSLQGLAGEIVGE). The FFAT motif lies at 157-163 (VYFTASS). Thr160 bears the Phosphothreonine mark. The segment at 168-203 (TDAESEGGYTTANAESDYERDSDKESEDAEDEVSCE) is disordered. Phosphoserine occurs at positions 183, 193, 212, and 233. Positions 191–201 (KESEDAEDEVS) are enriched in acidic residues.

This sequence belongs to the RMDN family. Interacts with PTPN2. Interacts with microtubules. Interacts with VAPB. Interacts (via FFAT motif) with MOSPD2 (via MSP domain). Interacts (via phosphorylated FFAT motif) with MOSPD2, VAPA and VAPB. In terms of processing, phosphorylation at Thr-160 of the FFAT motif activates interaction with MOSPD2, VAPA and VAPB.

Its subcellular location is the mitochondrion outer membrane. The protein localises to the cytoplasm. The protein resides in the nucleus. It is found in the cytoskeleton. It localises to the spindle. Its subcellular location is the spindle pole. Its function is as follows. Involved in cellular calcium homeostasis regulation. May participate in differentiation and apoptosis of keratinocytes. Overexpression induces apoptosis. This chain is Regulator of microtubule dynamics protein 3, found in Rattus norvegicus (Rat).